The following is a 180-amino-acid chain: Outer-membrane lipoprotein LolB (180 aa).

The first 16 residues, 1–16 (MIRRVLLLSLALLLAG), serve as a signal peptide directing secretion. A lipid anchor (N-palmitoyl cysteine) is attached at Cys-17. Cys-17 carries the S-diacylglycerol cysteine lipid modification.

Belongs to the LolB family. As to quaternary structure, monomer.

It is found in the cell outer membrane. Functionally, plays a critical role in the incorporation of lipoproteins in the outer membrane after they are released by the LolA protein. The polypeptide is Outer-membrane lipoprotein LolB (Chromobacterium violaceum (strain ATCC 12472 / DSM 30191 / JCM 1249 / CCUG 213 / NBRC 12614 / NCIMB 9131 / NCTC 9757 / MK)).